Reading from the N-terminus, the 182-residue chain is ATP-dependent protease subunit HslV (182 aa).

Thr12 is an active-site residue. Na(+) contacts are provided by Gly167, Cys170, and Thr173.

Belongs to the peptidase T1B family. HslV subfamily. A double ring-shaped homohexamer of HslV is capped on each side by a ring-shaped HslU homohexamer. The assembly of the HslU/HslV complex is dependent on binding of ATP.

It is found in the cytoplasm. The enzyme catalyses ATP-dependent cleavage of peptide bonds with broad specificity.. With respect to regulation, allosterically activated by HslU binding. Its function is as follows. Protease subunit of a proteasome-like degradation complex believed to be a general protein degrading machinery. The polypeptide is ATP-dependent protease subunit HslV (Acidiphilium cryptum (strain JF-5)).